An 82-amino-acid polypeptide reads, in one-letter code: Delta-ctenitoxin-Pn1a (82 aa).

The N-terminal stretch at 1-16 (MKVAIVFLSLLVLAFA) is a signal peptide. Positions 17–34 (SESIEENREEFPVEESAR) are excised as a propeptide. 5 cysteine pairs are disulfide-bonded: cysteine 35–cysteine 49, cysteine 42–cysteine 55, cysteine 46–cysteine 82, cysteine 48–cysteine 65, and cysteine 57–cysteine 63.

This sequence belongs to the neurotoxin 03 (Tx2) family. 05 subfamily. As to expression, expressed by the venom gland.

It localises to the secreted. This neurotoxin binds at site 3 of insect voltage-activated sodium channels (Nav) and prolongs evoked axonal action potentials by a slowing down of sodium current inactivation. The toxin also inhibits glutamate uptake from rat brain synaptosomes. It reversibly inhibits the N-methyl-D-aspartate (NMDA)-subtype of ionotropic glutamate receptor (GRIN). In addition, the toxin shows antinociceptive effect in all rat pain models tested (inflammatory, neuropathic and nociceptive). The antinociceptive effect is partially blocked when selective antagonists of both mu- and delta-opioid receptors are administered, revealing that the antinociceptive effect of the toxin involves both opioid and cannabinoid endogenous systems. In vivo, it is highly toxic to house fly (Musca domestica), toxic to cockroach, but has no effect when intracerebroventricularly injected into mice. The polypeptide is Delta-ctenitoxin-Pn1a (Phoneutria nigriventer (Brazilian armed spider)).